The following is a 412-amino-acid chain: Translation initiation factor 2 subunit gamma (412 aa).

The tr-type G domain occupies 7-203; the sequence is QPEVNIGLVG…AIESEIPTPD (197 aa). Residues 16 to 23 are G1; sequence GHVDHGKT. Residues Asp-19, Thr-23, Gly-44, and Ser-46 each contribute to the Mg(2+) site. 19–24 lines the GTP pocket; that stretch reads DHGKTT. Residues 44–48 form a G2 region; that stretch reads GISIR. The tract at residues 90–93 is G3; it reads DAPG. Residues 146–149 and 181–183 contribute to the GTP site; these read NKVD and SAQ. Residues 146–149 are G4; sequence NKVD. The tract at residues 181 to 183 is G5; the sequence is SAQ.

The protein belongs to the TRAFAC class translation factor GTPase superfamily. Classic translation factor GTPase family. EIF2G subfamily. As to quaternary structure, heterotrimer composed of an alpha, a beta and a gamma chain. Requires Mg(2+) as cofactor.

The catalysed reaction is GTP + H2O = GDP + phosphate + H(+). Functionally, eIF-2 functions in the early steps of protein synthesis by forming a ternary complex with GTP and initiator tRNA. In Halorubrum lacusprofundi (strain ATCC 49239 / DSM 5036 / JCM 8891 / ACAM 34), this protein is Translation initiation factor 2 subunit gamma.